A 447-amino-acid chain; its full sequence is MANVIVIGAQWGDEGKGKITDLLSRSADVVVRYQGGVNAGHTIVVKGQTFKLHLIPSGILYPDTECMIGCGTVIDPQVLIKELDQLESLNISTKNLLISETAHVTMPYHRLIDKASEERRGSHKIGTTGRGIGPTYADKSERTGIRVLDLMDPAALRDQLAWTINNKNLILEKLYNLPPLDTEEVVKEYLGYAERLRPHVVDTSLKIYDAIQRRRNILFEGAQGTLLDLDHGTYPYVTSSNPVAGGACVGTGLGPTMIDRVIGVSKAYTTRVGEGPFPTELDGELGELLCDRGAEFGTTTGRKRRCGWFDAVIGRYAVRINGMDCMAITKLDVLDELEEIQVCIAYEIDGDRCDHFPTSARQFARCRPIYKTLPGWQVPTSECRTLEDLPQQALDYLKFLAELMEVPIAIVSLGASRDQTIIVEDPIHGPKRALLHPDGTPASLLSA.

GTP-binding positions include G12–K18 and G40–T42. Catalysis depends on D13, which acts as the Proton acceptor. Positions 13 and 40 each coordinate Mg(2+). Residues D13–K16, N38–H41, T128, R142, Q223, T238, and R302 each bind IMP. Catalysis depends on H41, which acts as the Proton donor. T298 to R304 lines the substrate pocket. GTP contacts are provided by residues R304, K330 to D332, and S412 to G414.

The protein belongs to the adenylosuccinate synthetase family. As to quaternary structure, homodimer. Requires Mg(2+) as cofactor.

Its subcellular location is the cytoplasm. It carries out the reaction IMP + L-aspartate + GTP = N(6)-(1,2-dicarboxyethyl)-AMP + GDP + phosphate + 2 H(+). Its pathway is purine metabolism; AMP biosynthesis via de novo pathway; AMP from IMP: step 1/2. Functionally, plays an important role in the de novo pathway of purine nucleotide biosynthesis. Catalyzes the first committed step in the biosynthesis of AMP from IMP. In Trichormus variabilis (strain ATCC 29413 / PCC 7937) (Anabaena variabilis), this protein is Adenylosuccinate synthetase.